The chain runs to 258 residues: Imidazole glycerol phosphate synthase subunit HisF (258 aa).

Residues Asp-11 and Asp-130 contribute to the active site.

Belongs to the HisA/HisF family. Heterodimer of HisH and HisF.

Its subcellular location is the cytoplasm. It catalyses the reaction 5-[(5-phospho-1-deoxy-D-ribulos-1-ylimino)methylamino]-1-(5-phospho-beta-D-ribosyl)imidazole-4-carboxamide + L-glutamine = D-erythro-1-(imidazol-4-yl)glycerol 3-phosphate + 5-amino-1-(5-phospho-beta-D-ribosyl)imidazole-4-carboxamide + L-glutamate + H(+). The protein operates within amino-acid biosynthesis; L-histidine biosynthesis; L-histidine from 5-phospho-alpha-D-ribose 1-diphosphate: step 5/9. IGPS catalyzes the conversion of PRFAR and glutamine to IGP, AICAR and glutamate. The HisF subunit catalyzes the cyclization activity that produces IGP and AICAR from PRFAR using the ammonia provided by the HisH subunit. The polypeptide is Imidazole glycerol phosphate synthase subunit HisF (Xanthomonas oryzae pv. oryzae (strain MAFF 311018)).